Consider the following 196-residue polypeptide: Probable malonic semialdehyde reductase RutE (196 aa).

It belongs to the nitroreductase family. HadB/RutE subfamily. FMN is required as a cofactor.

The catalysed reaction is 3-hydroxypropanoate + NADP(+) = 3-oxopropanoate + NADPH + H(+). Its function is as follows. May reduce toxic product malonic semialdehyde to 3-hydroxypropionic acid, which is excreted. The protein is Probable malonic semialdehyde reductase RutE of Shigella dysenteriae serotype 1 (strain Sd197).